Reading from the N-terminus, the 496-residue chain is N-succinylglutamate 5-semialdehyde dehydrogenase (496 aa).

An NAD(+)-binding site is contributed by 229-234 (GSYATG). Catalysis depends on residues E252 and C286.

This sequence belongs to the aldehyde dehydrogenase family. AstD subfamily.

The enzyme catalyses N-succinyl-L-glutamate 5-semialdehyde + NAD(+) + H2O = N-succinyl-L-glutamate + NADH + 2 H(+). Its pathway is amino-acid degradation; L-arginine degradation via AST pathway; L-glutamate and succinate from L-arginine: step 4/5. In terms of biological role, catalyzes the NAD-dependent reduction of succinylglutamate semialdehyde into succinylglutamate. This is N-succinylglutamate 5-semialdehyde dehydrogenase from Legionella pneumophila subsp. pneumophila (strain Philadelphia 1 / ATCC 33152 / DSM 7513).